A 103-amino-acid chain; its full sequence is Protamine-2 (103 aa).

A disordered region spans residues 1–103; sequence MVRYRTRSLS…RTRRRRCRRY (103 aa). Ser8 and Ser10 each carry phosphoserine. The segment covering 8-17 has biased composition (basic and acidic residues); the sequence is SLSERPHEVH. Residues 18–29 are compositionally biased toward low complexity; sequence GQQVHGQDQGHN. At Ser37 the chain carries Phosphoserine. Over residues 39 to 48 the composition is skewed to basic and acidic residues; the sequence is EHVEVYERTH. Basic residues predominate over residues 49–103; that stretch reads QGHSHHRRRRCSQRRLHRIHRRRHRSCRRRRRRSCRHRRRHRRGCRTRRRRCRRY.

It belongs to the protamine P2 family. In terms of assembly, interacts with TDRP. Post-translationally, proteolytic processing into mature chains is required for histone eviction during spermatogenesis. Transition proteins (TNP1 and TNP2) are required for processing. In terms of tissue distribution, testis.

It is found in the nucleus. The protein resides in the chromosome. In terms of biological role, protamines substitute for histones in the chromatin of sperm during the haploid phase of spermatogenesis. They compact sperm DNA into a highly condensed, stable and inactive complex. The sequence is that of Protamine-2 (PRM2) from Erythrocebus patas (Red guenon).